Consider the following 114-residue polypeptide: uncharacterized protein (114 aa).

A helical transmembrane segment spans residues 7-27 (YIFSFWFFFLVEYVVTFRLFL). The disordered stretch occupies residues 90 to 114 (KNSPEKKKFKRGLPISSKYTDGKKR).

Its subcellular location is the membrane. This is an uncharacterized protein from Saccharomyces cerevisiae (strain ATCC 204508 / S288c) (Baker's yeast).